A 330-amino-acid chain; its full sequence is MKTAYIAKQRQISFVKSHFSRQLEERLGLIEVQAPILSRVGDGTQDNLSGCEKAVQVKVKALPDAQFEVVHSLAKWKRQTLGQHDFSAGEGLYTHMKALRPDEERLSPLHSVYVDQWDWERVMGDGERQFSTLKSTVEAIWAGIKATEAAVSEEFGLAPFLPDQIHFVHSQELLSRYPDLDAKGRERAIAKDLGAVFLVGIGGKLSDGHRHDVRAPDYDDWSTPSELGHAGLNGDILVWNPVLEDAFELSSMGIRVDADTLKHQLALTGDEDRLQLEWHQALLRGEMPQTIGGGIGQSRLTMLLLQLPHIGQVQCGVWPAAVRESVPSLL.

It belongs to the class-II aminoacyl-tRNA synthetase family. AsnA subfamily.

The protein localises to the cytoplasm. It carries out the reaction L-aspartate + NH4(+) + ATP = L-asparagine + AMP + diphosphate + H(+). It participates in amino-acid biosynthesis; L-asparagine biosynthesis; L-asparagine from L-aspartate (ammonia route): step 1/1. The chain is Aspartate--ammonia ligase from Escherichia coli O8 (strain IAI1).